A 262-amino-acid chain; its full sequence is Taurine import ATP-binding protein TauB (262 aa).

Residues 4–233 form the ABC transporter domain; that stretch reads LELERISAQY…RYAAGESARA (230 aa). 38–45 is an ATP binding site; the sequence is GPSGSGKT.

It belongs to the ABC transporter superfamily. Taurine importer (TC 3.A.1.17.1) family. The complex is composed of two ATP-binding proteins (TauB), two transmembrane proteins (TauC) and a solute-binding protein (TauA).

Its subcellular location is the cell inner membrane. The enzyme catalyses taurine(out) + ATP + H2O = taurine(in) + ADP + phosphate + H(+). Its function is as follows. Part of the ABC transporter complex TauABC involved in taurine import. Responsible for energy coupling to the transport system. This is Taurine import ATP-binding protein TauB from Pseudomonas putida (Arthrobacter siderocapsulatus).